A 559-amino-acid chain; its full sequence is Cocaine esterase (559 aa).

The N-terminal stretch at 1 to 26 is a signal peptide; that stretch reads MRLHRLRARLSAVACGLLLLLVRGQG. Position 27 is a pyrrolidone carboxylic acid (Q27). Cysteines 95 and 123 form a disulfide. An N-linked (GlcNAc...) asparagine glycan is attached at N111. S228 (acyl-ester intermediate) is an active-site residue. Residue N276 is glycosylated (N-linked (GlcNAc...) asparagine). C280 and C291 are oxidised to a cystine. Active-site charge relay system residues include E345 and H457. A Prevents secretion from ER motif is present at residues 556-559; that stretch reads HTEL.

It belongs to the type-B carboxylesterase/lipase family. Monomer. In terms of processing, glycosylated. Preferentially expressed in intestine with moderate expression in liver. Within the intestine, highest expression is found in small intestine with lower expression in colon and rectum.

It localises to the endoplasmic reticulum lumen. It carries out the reaction cocaine + H2O = ecgonine methyl ester + benzoate + H(+). The enzyme catalyses a carboxylic ester + H2O = an alcohol + a carboxylate + H(+). It catalyses the reaction 4-methylumbelliferyl acetate + H2O = 4-methylumbelliferone + acetate + H(+). The catalysed reaction is 2-(5Z,8Z,11Z,14Z-eicosatetraenoyl)-glycerol + H2O = glycerol + (5Z,8Z,11Z,14Z)-eicosatetraenoate + H(+). It carries out the reaction prostaglandin E2 1-glyceryl ester + H2O = prostaglandin E2 + glycerol + H(+). The enzyme catalyses prostaglandin F2alpha 1-glyceryl ester + H2O = prostaglandin F2alpha + glycerol + H(+). In terms of biological role, involved in the detoxification of xenobiotics and in the activation of ester and amide prodrugs. Shows high catalytic efficiency for hydrolysis of cocaine, 4-methylumbelliferyl acetate, heroin and 6-monoacetylmorphine. Hydrolyzes aspirin, substrates with large alcohol group and small acyl group and endogenous lipids such as triacylglycerol. Converts monoacylglycerides to free fatty acids and glycerol. Hydrolyzes of 2-arachidonoylglycerol and prostaglandins. In Homo sapiens (Human), this protein is Cocaine esterase.